Consider the following 335-residue polypeptide: Glycerol-3-phosphate dehydrogenase [NAD(P)+] (335 aa).

Residues serine 12, tryptophan 13, and lysine 107 each coordinate NADPH. Residues lysine 107, glycine 138, and serine 140 each coordinate sn-glycerol 3-phosphate. Residue alanine 142 participates in NADPH binding. Residues lysine 193, aspartate 246, serine 256, arginine 257, and asparagine 258 each coordinate sn-glycerol 3-phosphate. The active-site Proton acceptor is the lysine 193. Arginine 257 is a binding site for NADPH. Positions 281 and 283 each coordinate NADPH.

Belongs to the NAD-dependent glycerol-3-phosphate dehydrogenase family.

It is found in the cytoplasm. The enzyme catalyses sn-glycerol 3-phosphate + NAD(+) = dihydroxyacetone phosphate + NADH + H(+). It catalyses the reaction sn-glycerol 3-phosphate + NADP(+) = dihydroxyacetone phosphate + NADPH + H(+). It participates in membrane lipid metabolism; glycerophospholipid metabolism. Functionally, catalyzes the reduction of the glycolytic intermediate dihydroxyacetone phosphate (DHAP) to sn-glycerol 3-phosphate (G3P), the key precursor for phospholipid synthesis. This chain is Glycerol-3-phosphate dehydrogenase [NAD(P)+], found in Geobacter sulfurreducens (strain ATCC 51573 / DSM 12127 / PCA).